Here is a 131-residue protein sequence, read N- to C-terminus: UPF0102 protein RPD_0400 (131 aa).

It belongs to the UPF0102 family.

In Rhodopseudomonas palustris (strain BisB5), this protein is UPF0102 protein RPD_0400.